Here is a 177-residue protein sequence, read N- to C-terminus: MAELTTIARPYAKAAFDFAVEKQAVDSWAEMLGFAALVSENETMRPLLAGSMASSALAKLFIDVCGEQLNEHGQNLIKVMAENGRLEVLPAVAQLFAEYRLEWAKEVEADVVSATELSDAQQQQIGVSLEKRLARKVKLNCSVDAGLIAGVIIKAGDLVIDGSVSGKLARLSDKLQS.

This sequence belongs to the ATPase delta chain family. In terms of assembly, F-type ATPases have 2 components, F(1) - the catalytic core - and F(0) - the membrane proton channel. F(1) has five subunits: alpha(3), beta(3), gamma(1), delta(1), epsilon(1). F(0) has three main subunits: a(1), b(2) and c(10-14). The alpha and beta chains form an alternating ring which encloses part of the gamma chain. F(1) is attached to F(0) by a central stalk formed by the gamma and epsilon chains, while a peripheral stalk is formed by the delta and b chains.

It localises to the cell inner membrane. F(1)F(0) ATP synthase produces ATP from ADP in the presence of a proton or sodium gradient. F-type ATPases consist of two structural domains, F(1) containing the extramembraneous catalytic core and F(0) containing the membrane proton channel, linked together by a central stalk and a peripheral stalk. During catalysis, ATP synthesis in the catalytic domain of F(1) is coupled via a rotary mechanism of the central stalk subunits to proton translocation. In terms of biological role, this protein is part of the stalk that links CF(0) to CF(1). It either transmits conformational changes from CF(0) to CF(1) or is implicated in proton conduction. This is ATP synthase subunit delta from Shewanella amazonensis (strain ATCC BAA-1098 / SB2B).